Reading from the N-terminus, the 182-residue chain is CDP-diacylglycerol--glycerol-3-phosphate 3-phosphatidyltransferase (182 aa).

Residues 1-12 (MQLNIPTWLTLF) are Cytoplasmic-facing. The chain crosses the membrane as a helical span at residues 13 to 37 (RVVLIPFFVLAFYLPFVWAPMVCAI). At 38 to 60 (IFVFAAATDWFDGFLARRWKQTT) the chain is on the periplasmic side. Residues 61–81 (RFGAFLDPVADKVMVAVALVL) form a helical membrane-spanning segment. Topologically, residues 82 to 86 (VAEHY) are cytoplasmic. Residues 87–107 (HSWWITLPAATMIAREIIISS) form a helical membrane-spanning segment. Over 108-145 (LREWMAEIGKRSSVAVSWVGKVKTMAQMGSLVGLLWRP) the chain is Periplasmic. Residues 146 to 168 (DHNVELASFVLLYIAAVLTFWSM) traverse the membrane as a helical segment. At 169–181 (FQYLNAAWSDLLE) the chain is on the cytoplasmic side.

Belongs to the CDP-alcohol phosphatidyltransferase class-I family.

It localises to the cell inner membrane. The catalysed reaction is a CDP-1,2-diacyl-sn-glycerol + sn-glycerol 3-phosphate = a 1,2-diacyl-sn-glycero-3-phospho-(1'-sn-glycero-3'-phosphate) + CMP + H(+). It participates in phospholipid metabolism; phosphatidylglycerol biosynthesis; phosphatidylglycerol from CDP-diacylglycerol: step 1/2. Functionally, catalyzes the conversion of cytidine diphosphate diacylglycerol (CDP-DG) and glycerol 3-phosphate into phosphatidylglycerol. Essential for the synthesis of anionic phospholipids, thereby playing a role in balancing the ratio of zwitterionic and anionic phospholipids, which is thought to be important for normal membrane function. The sequence is that of CDP-diacylglycerol--glycerol-3-phosphate 3-phosphatidyltransferase from Yersinia pestis bv. Antiqua (strain Antiqua).